Consider the following 453-residue polypeptide: CAAX prenyl protease 1 (453 aa).

Residues 1–12 lie on the Lumenal side of the membrane; it reads MFDLKTILDHPN. A helical membrane pass occupies residues 13–33; that stretch reads IPWKLIISGFSIAQFSFESYL. The Cytoplasmic portion of the chain corresponds to 34–89; the sequence is TYRQYQKLSETKLPPVLEDEIDDETFHKSRNYSRAKAKFSIFGDVYNLAQKLVFIK. The helical transmembrane segment at 90–110 threads the bilayer; that stretch reads YDLFPKIWHMAVSLLNAVLPV. Over 111–121 the chain is Lumenal; it reads RFHMVSTVAQS. The chain crosses the membrane as a helical span at residues 122-142; sequence LCFLGLLSSLSTLVDLPLSYY. Over 143 to 167 the chain is Cytoplasmic; the sequence is SHFVLEEKFGFNKLTVQLWITDMIK. The helical transmembrane segment at 168-188 threads the bilayer; it reads SLTLAYAIGGPILYLFLKIFD. Residues 189–197 are Lumenal-facing; it reads KFPTDFLWY. The chain crosses the membrane as a helical span at residues 198–218; the sequence is IMVFLFVVQILAMTIIPVFIM. Topologically, residues 219–306 are cytoplasmic; that stretch reads PMFNKFTPLE…HEIGHWQKNH (88 aa). Residue His297 participates in Zn(2+) binding. The active site involves Glu298. Residue His301 participates in Zn(2+) binding. The helical transmembrane segment at 307–327 threads the bilayer; it reads IVNMVIFSQLHTFLIFSLFTS. At 328–357 the chain is on the lumenal side; that stretch reads IYRNTSFYNTFGFFLEKSTGSFVDPVITKE. The helical transmembrane segment at 358–378 threads the bilayer; the sequence is FPIIIGFMLFNDLLTPLECAM. Residues 379 to 453 are Cytoplasmic-facing; it reads QFVMSLISRT…LDYVSEKKKN (75 aa). Residue Glu390 participates in Zn(2+) binding. Asp394 serves as the catalytic Proton donor.

The protein belongs to the peptidase M48A family. The cofactor is Zn(2+).

Its subcellular location is the endoplasmic reticulum membrane. The catalysed reaction is Hydrolyzes the peptide bond -P2-(S-farnesyl or geranylgeranyl)C-P1'-P2'-P3'-COOH where P1' and P2' are amino acids with aliphatic side chains and P3' is any C-terminal residue.. Functionally, proteolytically removes the C-terminal three residues of farnesylated A-factor mating pheromone. Also acts to cleave the N-terminal extension of the pheromone. Does not act on Ras. The protein is CAAX prenyl protease 1 (STE24) of Saccharomyces cerevisiae (strain ATCC 204508 / S288c) (Baker's yeast).